The primary structure comprises 887 residues: Endoglucanase 1 (887 aa).

Residues 1–55 (MRLVNSLGRRKILLILAVIVAFSTVLLFAKLWGRKTSSTLDEVGSKTHGDLTAEN) form the signal peptide. The interval 40 to 66 (LDEVGSKTHGDLTAENKNGGYLPEEEI) is disordered. The span at 43 to 53 (VGSKTHGDLTA) shows a compositional bias: basic and acidic residues. The tract at residues 56-518 (KNGGYLPEEE…AKMYKLYGGS (463 aa)) is catalytic. Aspartate 131 acts as the Nucleophile in catalysis. Residues 441 to 460 (ENPPKRPHHRTAHGSWADSQ) are disordered. Residues histidine 448, aspartate 486, and glutamate 495 contribute to the active site. One can recognise a CBM3 1 domain in the interval 529 to 684 (VPEDEIFVEA…GVLVFGREPG (156 aa)). The interval 684 to 730 (GSASKSTSKDNGLSKATPTVKTESQPTAKHTQNPASDFKTPANQNSV) is disordered. Polar residues predominate over residues 686–729 (ASKSTSKDNGLSKATPTVKTESQPTAKHTQNPASDFKTPANQNS). Positions 736 to 887 (IKGEVVLQYA…SNKLVYGKEP (152 aa)) constitute a CBM3 2 domain.

The protein belongs to the glycosyl hydrolase 9 (cellulase E) family.

The catalysed reaction is Endohydrolysis of (1-&gt;4)-beta-D-glucosidic linkages in cellulose, lichenin and cereal beta-D-glucans.. It functions in the pathway glycan metabolism; cellulose degradation. This enzyme catalyzes the endohydrolysis of 1,4-beta-glucosidic linkages in cellulose, lichenin and cereal beta-D-glucans. Principally active against barley beta-glucan. This chain is Endoglucanase 1 (celI), found in Acetivibrio thermocellus (strain ATCC 27405 / DSM 1237 / JCM 9322 / NBRC 103400 / NCIMB 10682 / NRRL B-4536 / VPI 7372) (Clostridium thermocellum).